Here is a 134-residue protein sequence, read N- to C-terminus: MSPLCLLLLALALVAVPGARGACPVPADLKKSDGTRTCARLYENSDPYYDNCCQGPELSVDPGTDLPYLPSDWSNSASSLVVAQRCELTVWSLPGKRGKTRKFSTGSYPRLEEYRKGIFGTWAKSISGLYCKCY.

The N-terminal stretch at 1 to 21 is a signal peptide; that stretch reads MSPLCLLLLALALVAVPGARG.

Monomer and homooligomer; most probably hexameric. Interacts with GP2. According to PubMed:10753942 interaction with syntaxins shown in PubMed:9244306 is physiologically questionable. In terms of processing, contains intrachain disulfide bonds. As to expression, specifically expressed in pancreas and also detected in secretory granules of parotid gland (at protein level). Expressed in pancreas, spleen, small intestine, lung and neutrophilic granulocytes (at protein level). Expressed by epithelial cells in duodenum and colon.

It is found in the zymogen granule membrane. It localises to the zymogen granule lumen. Functions in exocytosis in pancreatic acinar cells regulating the fusion of zymogen granules with each other. May have a pore-forming activity on membranes and regulate exocytosis in other exocrine tissues. This chain is Syncollin (Sycn), found in Rattus norvegicus (Rat).